Consider the following 177-residue polypeptide: Acireductone dioxygenase (177 aa).

Residues 1 to 23 are disordered; the sequence is MVRAWYMDDSDADQRAPHMTDPP. Fe(2+) is bound by residues His86, His88, Glu92, and His131. Positions 86, 88, 92, and 131 each coordinate Ni(2+).

This sequence belongs to the acireductone dioxygenase (ARD) family. Requires Fe(2+) as cofactor. Ni(2+) serves as cofactor.

Its subcellular location is the cytoplasm. It localises to the nucleus. It catalyses the reaction 1,2-dihydroxy-5-(methylsulfanyl)pent-1-en-3-one + O2 = 4-methylsulfanyl-2-oxobutanoate + formate + 2 H(+). The catalysed reaction is 1,2-dihydroxy-5-(methylsulfanyl)pent-1-en-3-one + O2 = 3-(methylsulfanyl)propanoate + CO + formate + 2 H(+). It participates in amino-acid biosynthesis; L-methionine biosynthesis via salvage pathway; L-methionine from S-methyl-5-thio-alpha-D-ribose 1-phosphate: step 5/6. Its function is as follows. Catalyzes 2 different reactions between oxygen and the acireductone 1,2-dihydroxy-3-keto-5-methylthiopentene (DHK-MTPene) depending upon the metal bound in the active site. Fe-containing acireductone dioxygenase (Fe-ARD) produces formate and 2-keto-4-methylthiobutyrate (KMTB), the alpha-ketoacid precursor of methionine in the methionine recycle pathway. Ni-containing acireductone dioxygenase (Ni-ARD) produces methylthiopropionate, carbon monoxide and formate, and does not lie on the methionine recycle pathway. The chain is Acireductone dioxygenase from Branchiostoma floridae (Florida lancelet).